The chain runs to 89 residues: Signal recognition particle 19 kDa protein (89 aa).

This sequence belongs to the SRP19 family. As to quaternary structure, part of the signal recognition particle protein translocation system, which is composed of SRP and FtsY. Archaeal SRP consists of a 7S RNA molecule of 300 nucleotides and two protein subunits: SRP54 and SRP19.

It is found in the cytoplasm. Functionally, involved in targeting and insertion of nascent membrane proteins into the cytoplasmic membrane. Binds directly to 7S RNA and mediates binding of the 54 kDa subunit of the SRP. This Methanococcus maripaludis (strain DSM 14266 / JCM 13030 / NBRC 101832 / S2 / LL) protein is Signal recognition particle 19 kDa protein.